The sequence spans 328 residues: Galactinol synthase 10 (328 aa).

The active site involves lysine 106. The Mn(2+) site is built by aspartate 122, aspartate 124, and histidine 248.

This sequence belongs to the glycosyltransferase 8 family. Galactosyltransferase subfamily. A divalent metal cation serves as cofactor.

Its subcellular location is the cytoplasm. The enzyme catalyses myo-inositol + UDP-alpha-D-galactose = alpha-D-galactosyl-(1-&gt;3)-1D-myo-inositol + UDP + H(+). Galactinol synthase involved in the biosynthesis of raffinose family oligosaccharides (RFOs) that function as osmoprotectants. May promote plant stress tolerance. This chain is Galactinol synthase 10 (GOLS10), found in Arabidopsis thaliana (Mouse-ear cress).